Here is a 96-residue protein sequence, read N- to C-terminus: Putative pterin-4-alpha-carbinolamine dehydratase (96 aa).

This sequence belongs to the pterin-4-alpha-carbinolamine dehydratase family.

It catalyses the reaction (4aS,6R)-4a-hydroxy-L-erythro-5,6,7,8-tetrahydrobiopterin = (6R)-L-erythro-6,7-dihydrobiopterin + H2O. This chain is Putative pterin-4-alpha-carbinolamine dehydratase, found in Herpetosiphon aurantiacus (strain ATCC 23779 / DSM 785 / 114-95).